The following is an 815-amino-acid chain: Ferripyoverdine receptor (815 aa).

The first 43 residues, 1–43 (MPAPHGLSPLSKAFLMRRAFQRRILPHSLAMALSLPLAGYVQA), serve as a signal peptide directing secretion. Residues 161-271 (TPRETPQSIT…LGATINLIRK (111 aa)) form the TBDR plug domain. One can recognise a TBDR beta-barrel domain in the interval 276-815 (EFKGHVELGA…NLMFSTRWDF (540 aa)). The short motif at 798-815 (SASYGDPRNLMFSTRWDF) is the TonB C-terminal box element.

This sequence belongs to the TonB-dependent receptor family.

It is found in the cell outer membrane. Receptor for the siderophore ferripyoverdine. In Pseudomonas aeruginosa (strain ATCC 15692 / DSM 22644 / CIP 104116 / JCM 14847 / LMG 12228 / 1C / PRS 101 / PAO1), this protein is Ferripyoverdine receptor (fpvA).